The primary structure comprises 86 residues: Toxin Td2 (86 aa).

The N-terminal stretch at methionine 1–cysteine 20 is a signal peptide. The LCN-type CS-alpha/beta domain maps to lysine 21–glycine 83. 4 disulfides stabilise this stretch: cysteine 31–cysteine 82, cysteine 35–cysteine 57, cysteine 43–cysteine 63, and cysteine 47–cysteine 65. Position 84 is an arginine amide (arginine 84).

In terms of tissue distribution, expressed by the venom gland.

Its subcellular location is the secreted. In terms of biological role, beta toxins bind voltage-independently at site-4 of sodium channels (Nav) and shift the voltage of activation toward more negative potentials thereby affecting sodium channel activation and promoting spontaneous and repetitive firing. This is Toxin Td2 from Tityus discrepans (Venezuelan scorpion).